We begin with the raw amino-acid sequence, 141 residues long: Venom protein family 1 protein 1 (141 aa).

An N-terminal signal peptide occupies residues Met-1–Gly-17. Cys-62 and Cys-139 are disulfide-bonded.

This sequence belongs to the insect vpf1 family. Expressed by the venom gland (posterior main gland) (at protein level).

It localises to the secreted. This chain is Venom protein family 1 protein 1, found in Platymeris rhadamanthus (Red spot assassin bug).